An 871-amino-acid chain; its full sequence is Metabotropic glutamate receptor 6 (871 aa).

Positions 1-23 (MGRLPVLLLWLAWWLSQAGIACG) are cleaved as a signal peptide. At 24-579 (AGSVRLAGGL…VVRLTWSSPW (556 aa)) the chain is on the extracellular side. A disulfide bond links Cys51 and Cys93. Residues Ser148, 169–171 (AST), and Tyr219 each bind L-glutamate. 7 cysteine pairs are disulfide-bonded: Cys238–Cys530, Cys361–Cys377, Cys417–Cys424, Cys512–Cys531, Cys516–Cys534, Cys537–Cys549, and Cys552–Cys565. Asn290 carries an N-linked (GlcNAc...) asparagine glycan. Asp301 serves as a coordination point for L-glutamate. Lys394 contributes to the L-glutamate binding site. 2 N-linked (GlcNAc...) asparagine glycosylation sites follow: Asn445 and Asn473. A glycan (N-linked (GlcNAc...) asparagine) is linked at Asn561. A helical membrane pass occupies residues 580-602 (AALPLLLAVLGIMATTTIMATFM). Residues 603 to 616 (RHNDTPIVRASGRE) are Cytoplasmic-facing. A helical transmembrane segment spans residues 617–637 (LSYVLLTGIFLIYAITFLMVA). Residues 638–648 (EPCAAICAARR) are Extracellular-facing. Residues 649–667 (LLLGLGTTLSYSALLTKTN) traverse the membrane as a helical segment. At 668 to 691 (RIYRIFEQGKRSVTPPPFISPTSQ) the chain is on the cytoplasmic side. A helical membrane pass occupies residues 692–712 (LVITFGLTSLQVVGVIAWLGA). Residues 713-742 (QPPHSVIDYEEQRTVDPEQARGVLKCDMSD) lie on the Extracellular side of the membrane. A helical transmembrane segment spans residues 743-764 (LSLIGCLGYSLLLMVTCTVYAI). The Cytoplasmic portion of the chain corresponds to 765-777 (KARGVPETFNEAK). A helical membrane pass occupies residues 778 to 800 (PIGFTMYTTCIIWLAFVPIFFGT). Residues 801 to 813 (AQSAEKIYIQTTT) lie on the Extracellular side of the membrane. Residues 814-839 (LTVSLSLSASVSLGMLYVPKTYVILF) form a helical membrane-spanning segment. At 840-871 (HPEQNVQKRKRSLKKTSTMAAPPQNENAEDAK) the chain is on the cytoplasmic side. Residues 850-871 (RSLKKTSTMAAPPQNENAEDAK) are disordered.

The protein belongs to the G-protein coupled receptor 3 family. As to quaternary structure, homodimer. Interacts with GPR179. Interacts with photoreceptor synaptic protein LRIT1 (via its N-terminal extracellular domain). Restricted expression in the inner nuclear layer of the retina.

The protein localises to the cell membrane. It is found in the endoplasmic reticulum membrane. The protein resides in the golgi apparatus membrane. Its subcellular location is the cell projection. It localises to the dendrite. Its function is as follows. G-protein coupled receptor for glutamate. Ligand binding causes a conformation change that triggers signaling via guanine nucleotide-binding proteins (G proteins) and modulates the activity of down-stream effectors, such as adenylate cyclase. Signaling inhibits adenylate cyclase activity. Signaling stimulates TRPM1 channel activity and Ca(2+) uptake. Required for normal vision. The protein is Metabotropic glutamate receptor 6 (Grm6) of Rattus norvegicus (Rat).